Consider the following 428-residue polypeptide: Histidinol dehydrogenase (428 aa).

Residues Tyr124, Gln186, and Asn209 each contribute to the NAD(+) site. Substrate-binding residues include Ser233, Gln255, and His258. 2 residues coordinate Zn(2+): Gln255 and His258. Residues Glu322 and His323 each act as proton acceptor in the active site. Substrate contacts are provided by His323, Asp356, Glu410, and His415. Residue Asp356 participates in Zn(2+) binding. Zn(2+) is bound at residue His415.

This sequence belongs to the histidinol dehydrogenase family. Requires Zn(2+) as cofactor.

The enzyme catalyses L-histidinol + 2 NAD(+) + H2O = L-histidine + 2 NADH + 3 H(+). It participates in amino-acid biosynthesis; L-histidine biosynthesis; L-histidine from 5-phospho-alpha-D-ribose 1-diphosphate: step 9/9. Catalyzes the sequential NAD-dependent oxidations of L-histidinol to L-histidinaldehyde and then to L-histidine. The protein is Histidinol dehydrogenase of Bacteroides fragilis (strain ATCC 25285 / DSM 2151 / CCUG 4856 / JCM 11019 / LMG 10263 / NCTC 9343 / Onslow / VPI 2553 / EN-2).